A 217-amino-acid chain; its full sequence is Large ribosomal subunit protein uL3 (217 aa).

The tract at residues A135–T154 is disordered. Q153 bears the N5-methylglutamine mark.

Belongs to the universal ribosomal protein uL3 family. In terms of assembly, part of the 50S ribosomal subunit. Forms a cluster with proteins L14 and L19. Methylated by PrmB.

Its function is as follows. One of the primary rRNA binding proteins, it binds directly near the 3'-end of the 23S rRNA, where it nucleates assembly of the 50S subunit. The sequence is that of Large ribosomal subunit protein uL3 from Coxiella burnetii (strain CbuG_Q212) (Coxiella burnetii (strain Q212)).